We begin with the raw amino-acid sequence, 408 residues long: S100P-binding protein (408 aa).

Disordered regions lie at residues 1 to 111, 162 to 234, and 271 to 291; these read MMCS…AETP, KDET…SENP, and VSTSSNKQDVLNKDSGKMKGH. Positions 28 to 59 are enriched in acidic residues; it reads SLDEDGLDDSLLELSEGEEDDGDVNYTEEEID. 2 stretches are compositionally biased toward basic and acidic residues: residues 77 to 86 and 162 to 185; these read DGGHVEKGER and KDETDSSKDTEKLSSLGEEMREDG. S187 is modified (phosphoserine). Polar residues predominate over residues 188–234; sequence PNESKLCTESEGISPNNSAWNGPQLSSSNNNFQQTVSDKNMPDSENP. Positions 280–291 are enriched in basic and acidic residues; it reads VLNKDSGKMKGH.

Interacts with S100P. Expressed in brain, spleen, and lung. Not detected in pancreas or liver. In pancreas, expressed predominantly in islet cells and to a lesser extent in acinar cells, but not expressed in ductal cells. Up-regulated in various pancreatic ductal adenocarcinomas and pancreatic intraepithelial neoplasias. Detected in pancreatic ductal adenocarcinoma cells (at protein level). Not detected in non-neoplastic ductal epithelium (at protein level).

It is found in the nucleus. This chain is S100P-binding protein, found in Homo sapiens (Human).